Here is a 255-residue protein sequence, read N- to C-terminus: 5-oxoprolinase subunit A (255 aa).

It belongs to the LamB/PxpA family. Forms a complex composed of PxpA, PxpB and PxpC.

It catalyses the reaction 5-oxo-L-proline + ATP + 2 H2O = L-glutamate + ADP + phosphate + H(+). Its function is as follows. Catalyzes the cleavage of 5-oxoproline to form L-glutamate coupled to the hydrolysis of ATP to ADP and inorganic phosphate. The chain is 5-oxoprolinase subunit A from Campylobacter jejuni subsp. doylei (strain ATCC BAA-1458 / RM4099 / 269.97).